Consider the following 264-residue polypeptide: Undecaprenyl-diphosphatase (264 aa).

A run of 8 helical transmembrane segments spans residues 1–21, 40–60, 81–101, 109–129, 140–160, 183–203, 211–231, and 239–259; these read MTVF…FLPI, GLTF…AFFW, MFWY…LLEE, TPLL…WADA, ISMA…IPGV, FSFL…LKDI, AFIT…SFLL, and FALF…LAAA.

Belongs to the UppP family.

The protein localises to the cell membrane. It catalyses the reaction di-trans,octa-cis-undecaprenyl diphosphate + H2O = di-trans,octa-cis-undecaprenyl phosphate + phosphate + H(+). Catalyzes the dephosphorylation of undecaprenyl diphosphate (UPP). Confers resistance to bacitracin. The protein is Undecaprenyl-diphosphatase of Pelotomaculum thermopropionicum (strain DSM 13744 / JCM 10971 / SI).